Here is a 214-residue protein sequence, read N- to C-terminus: Pyrophosphatase PpaX (214 aa).

Aspartate 9 serves as the catalytic Nucleophile.

The protein belongs to the HAD-like hydrolase superfamily. PpaX family. The cofactor is Mg(2+).

The catalysed reaction is diphosphate + H2O = 2 phosphate + H(+). Functionally, hydrolyzes pyrophosphate formed during P-Ser-HPr dephosphorylation by HPrK/P. Might play a role in controlling the intracellular pyrophosphate pool. This Oceanobacillus iheyensis (strain DSM 14371 / CIP 107618 / JCM 11309 / KCTC 3954 / HTE831) protein is Pyrophosphatase PpaX.